Consider the following 206-residue polypeptide: Large ribosomal subunit protein mL40 (206 aa).

Residues 1 to 46 (MATAAMLCAARALRPRSWIPGTCQAQVRHTHQRASLLSFWELIPMR) constitute a mitochondrion transit peptide. The tract at residues 170–190 (PFEKEGPHYTPPVPNYQAPEG) is disordered.

The protein belongs to the mitochondrion-specific ribosomal protein mL40 family. As to quaternary structure, component of the mitochondrial ribosome large subunit (39S) which comprises a 16S rRNA and about 50 distinct proteins.

It localises to the mitochondrion. The polypeptide is Large ribosomal subunit protein mL40 (Mrpl40) (Rattus norvegicus (Rat)).